A 487-amino-acid polypeptide reads, in one-letter code: FAD-dependent oxidoreductase domain-containing protein 1 (487 aa).

Residues 62-82 form a helical membrane-spanning segment; it reads EQADVVIIGGGILGLSVAFWL.

Associates with components of the mitochondrial respiratory chain complex I. The cofactor is FAD.

It localises to the mitochondrion inner membrane. In terms of biological role, required for the assembly of the mitochondrial membrane respiratory chain NADH dehydrogenase (Complex I). Involved in mid-late stages of complex I assembly. In Mus musculus (Mouse), this protein is FAD-dependent oxidoreductase domain-containing protein 1 (Foxred1).